Reading from the N-terminus, the 258-residue chain is Aspartate/glutamate leucyltransferase (258 aa).

The protein belongs to the R-transferase family. Bpt subfamily.

The protein resides in the cytoplasm. The enzyme catalyses N-terminal L-glutamyl-[protein] + L-leucyl-tRNA(Leu) = N-terminal L-leucyl-L-glutamyl-[protein] + tRNA(Leu) + H(+). The catalysed reaction is N-terminal L-aspartyl-[protein] + L-leucyl-tRNA(Leu) = N-terminal L-leucyl-L-aspartyl-[protein] + tRNA(Leu) + H(+). Functions in the N-end rule pathway of protein degradation where it conjugates Leu from its aminoacyl-tRNA to the N-termini of proteins containing an N-terminal aspartate or glutamate. This is Aspartate/glutamate leucyltransferase from Rhizobium leguminosarum bv. trifolii (strain WSM2304).